Here is a 500-residue protein sequence, read N- to C-terminus: Trehalose-6-phosphate synthase (500 aa).

A D-glucose 6-phosphate-binding site is contributed by arginine 28. Residue 48-49 (GG) coordinates UDP-alpha-D-glucose. Residues tyrosine 104 and aspartate 158 each contribute to the D-glucose 6-phosphate site. Positions 300 and 305 each coordinate UDP-alpha-D-glucose. Arginine 338 is a D-glucose 6-phosphate binding site. A UDP-alpha-D-glucose-binding site is contributed by 403–407 (LVAKE).

This sequence belongs to the glycosyltransferase 20 family. Homotetramer.

It catalyses the reaction ADP-alpha-D-glucose + D-glucose 6-phosphate = alpha,alpha-trehalose 6-phosphate + ADP + H(+). The catalysed reaction is CDP-alpha-D-glucose + D-glucose 6-phosphate = alpha,alpha-trehalose 6-phosphate + CDP + H(+). The enzyme catalyses GDP-alpha-D-glucose + D-glucose 6-phosphate = alpha,alpha-trehalose 6-phosphate + GDP + H(+). It carries out the reaction TDP-alpha-D-glucose + D-glucose 6-phosphate = 5-methyl-UDP + alpha,alpha-trehalose 6-phosphate + H(+). It catalyses the reaction D-glucose 6-phosphate + UDP-alpha-D-glucose = alpha,alpha-trehalose 6-phosphate + UDP + H(+). It functions in the pathway glycan biosynthesis; trehalose biosynthesis. Its function is as follows. Probably involved in the osmoprotection via the biosynthesis of trehalose and in the production of glycogen and alpha-glucan via the TreS-Pep2 branch involved in the biosynthesis of maltose-1-phosphate (M1P). Catalyzes the transfer of glucose from UDP-glucose (UDP-Glc) to D-glucose 6-phosphate (Glc-6-P) to form trehalose-6-phosphate. Probably also able to use ADP-Glc, CDP-Glc, GDP-Glc and TDP-Glc as glucosyl donors. This Mycobacterium ulcerans (strain Agy99) protein is Trehalose-6-phosphate synthase.